A 186-amino-acid polypeptide reads, in one-letter code: Large ribosomal subunit protein uL6 (186 aa).

This sequence belongs to the universal ribosomal protein uL6 family. In terms of assembly, part of the 50S ribosomal subunit.

Its function is as follows. This protein binds to the 23S rRNA, and is important in its secondary structure. It is located near the subunit interface in the base of the L7/L12 stalk, and near the tRNA binding site of the peptidyltransferase center. The protein is Large ribosomal subunit protein uL6 of Ignicoccus hospitalis (strain KIN4/I / DSM 18386 / JCM 14125).